The primary structure comprises 417 residues: Carboxypeptidase B (417 aa).

Residues 1–15 form the signal peptide; the sequence is MLALLVLVTVALASA. A propeptide spans 16–110 (activation peptide); the sequence is HHGGEHFEGE…VEAQFDSRVR (95 aa). Residues 118–412 enclose the Peptidase M14 domain; the sequence is KYNKWETIEA…LAIKYVASYV (295 aa). A disulfide bridge links Cys-173 with Cys-186. Residues His-176 and Glu-179 each contribute to the Zn(2+) site. Residues 176–179, Arg-234, and 251–252 each bind substrate; these read HARE and NR. 2 cysteine pairs are disulfide-bonded: Cys-245–Cys-268 and Cys-259–Cys-273. His-304 is a Zn(2+) binding site. Residues 305–306 and Tyr-356 each bind substrate; that span reads SY. Glu-378 acts as the Proton donor/acceptor in catalysis.

This sequence belongs to the peptidase M14 family. It depends on Zn(2+) as a cofactor. In terms of tissue distribution, pancreas.

The protein resides in the secreted. Its subcellular location is the zymogen granule lumen. The enzyme catalyses Preferential release of a C-terminal lysine or arginine amino acid.. The sequence is that of Carboxypeptidase B (CPB1) from Homo sapiens (Human).